A 505-amino-acid chain; its full sequence is RNA-splicing ligase RtcB homolog (505 aa).

Residues Asp-119, Cys-122, His-227, His-259, and His-353 each contribute to the Mn(2+) site. 226-230 (NHYAE) serves as a coordination point for GMP. GMP contacts are provided by residues 353 to 354 (HN), 402 to 405 (GGTM), Ser-409, 428 to 431 (HGAG), and Lys-504. Residue His-428 is the GMP-histidine intermediate of the active site.

The protein belongs to the RtcB family. Catalytic component of the tRNA-splicing ligase complex. It depends on Mn(2+) as a cofactor.

The protein localises to the nucleus. It localises to the cytoplasm. The enzyme catalyses a 3'-end 3'-phospho-ribonucleotide-RNA + a 5'-end dephospho-ribonucleoside-RNA + GTP = a ribonucleotidyl-ribonucleotide-RNA + GMP + diphosphate. It catalyses the reaction a 3'-end 2',3'-cyclophospho-ribonucleotide-RNA + a 5'-end dephospho-ribonucleoside-RNA + GTP + H2O = a ribonucleotidyl-ribonucleotide-RNA + GMP + diphosphate + H(+). In terms of biological role, catalytic subunit of the tRNA-splicing ligase complex that acts by directly joining spliced tRNA halves to mature-sized tRNAs by incorporating the precursor-derived splice junction phosphate into the mature tRNA as a canonical 3',5'-phosphodiester. May act as an RNA ligase with broad substrate specificity, and may function toward other RNAs. The polypeptide is RNA-splicing ligase RtcB homolog (Danio rerio (Zebrafish)).